A 647-amino-acid chain; its full sequence is ATP-dependent zinc metalloprotease FtsH (647 aa).

Positions 1 to 33 (MARKSDEDTNPMDKFMDRLRGSPGDGGPGRPDP) are disordered. Topologically, residues 1 to 39 (MARKSDEDTNPMDKFMDRLRGSPGDGGPGRPDPSQRKVH) are cytoplasmic. The helical transmembrane segment at 40 to 60 (FSIWYFILALLLIVWMQTYMG) threads the bilayer. Residues 61–134 (EQQSEKISYS…RFSGDVQNPW (74 aa)) are Periplasmic-facing. Residues 135 to 155 (LGLITWWLLPFAIMIFFWSFL) form a helical membrane-spanning segment. Topologically, residues 156 to 647 (MRRMGGGPQG…DPVQVEGGAA (492 aa)) are cytoplasmic. 227–234 (GAPGTGKT) is an ATP binding site. Zn(2+) is bound at residue H449. The active site involves E450. Zn(2+)-binding residues include H453 and D526.

In the central section; belongs to the AAA ATPase family. It in the C-terminal section; belongs to the peptidase M41 family. As to quaternary structure, homohexamer. Requires Zn(2+) as cofactor.

Its subcellular location is the cell inner membrane. Its function is as follows. Acts as a processive, ATP-dependent zinc metallopeptidase for both cytoplasmic and membrane proteins. Plays a role in the quality control of integral membrane proteins. This chain is ATP-dependent zinc metalloprotease FtsH, found in Syntrophobacter fumaroxidans (strain DSM 10017 / MPOB).